Here is a 360-residue protein sequence, read N- to C-terminus: DNA replication and repair protein RecF (360 aa).

An ATP-binding site is contributed by 30–37; sequence GQNGSGKT.

The protein belongs to the RecF family.

The protein resides in the cytoplasm. Its function is as follows. The RecF protein is involved in DNA metabolism; it is required for DNA replication and normal SOS inducibility. RecF binds preferentially to single-stranded, linear DNA. It also seems to bind ATP. The polypeptide is DNA replication and repair protein RecF (Shewanella sp. (strain MR-7)).